Reading from the N-terminus, the 550-residue chain is Centrosomal and chromosomal factor (550 aa).

Coiled-coil stretches lie at residues 20-44, 105-126, and 239-274; these read SALSALQQQQQQQQQQHSQTQQQHH, VANSRQQQQQQQQQQQQQQQQQ, and ATSAQQQQQQQQRYQQQQQQLRQQHQQMSQMSQQAH. Disordered stretches follow at residues 21–145, 208–320, 361–380, and 392–465; these read ALSA…KDYS, LSSG…HAAN, SHYAAKGSGGGAGGGKRDAM, and SGKL…SASV. 3 stretches are compositionally biased toward low complexity: residues 24 to 71, 81 to 136, and 221 to 320; these read ALQQ…QQQQ, ANTS…NAAP, and AAVA…HAAN. Composition is skewed to low complexity over residues 396–412 and 450–462; these read QQSQVQQQQPQQQQQHC and SATPTAGAASGGS.

In terms of assembly, homodimer. Interacts with esc, Trl, E(z), scm and ph-p in vitro. Found in vivo in an esc-containing complex, which may be the Esc/E(z) complex. Also found in vivo in a Pc-containing complex that may be the PRC1 complex, but does not interact with Pc directly. Interacts with cyclin CycG.

The protein localises to the nucleus. The protein resides in the cytoplasm. It localises to the cytoskeleton. It is found in the microtubule organizing center. Its subcellular location is the centrosome. The protein localises to the chromosome. Functionally, essential protein required for proper condensation of mitotic chromosomes and progression through mitosis. Binds to specific polytene chromosome sites, many of which are shared with the posterior sex combs (Psc) protein. Involved in maintaining Abd-B repression outside its normal expression domain. This is Centrosomal and chromosomal factor (corto) from Drosophila melanogaster (Fruit fly).